The following is a 431-amino-acid chain: Evolutionarily conserved signaling intermediate in Toll pathway, mitochondrial (431 aa).

The N-terminal 48 residues, 1–48, are a transit peptide targeting the mitochondrion; it reads MSWVQATLLARGLCRAWGGTCGAALTGTSISQVPRRLPRGLHCSAAAH. Residue K372 forms a Glycyl lysine isopeptide (Lys-Gly) (interchain with G-Cter in ubiquitin) linkage. Residues 400–431 are disordered; that stretch reads LQTSSAGLEEPPLPEDHQEEDDNLQRQQQGQS.

Belongs to the ECSIT family. As to quaternary structure, interacts with MAP3K1, SMAD4 and TRAF6. Interacts with SMAD1 only after BMP4-treatment. Part of the mitochondrial complex I assembly/MCIA complex that comprises at least the core subunits TMEM126B, NDUFAF1, ECSIT and ACAD9 and complement subunits such as COA1 and TMEM186. Interacts with NDUFAF1. Interacts with ACAD9. Interacts with TRIM59. Interacts with TMEM70 and TMEM242. Interacts (when ubiquitinated) with NF-kappa-B subunits RELA and NFKB1. Interacts with RIGI, IFIT1 and MAVS; these interactions promote RLR-mediated type I IFN induction. Interacts with SQSTM1; this interaction inhibits TLR4 signaling via functional regulation of the TRAF6-ECSIT complex. Interacts with cereblon/CRBN; this interaction inhibits the ubiquitination of ECSIT. In terms of processing, ubiquitinated on Lys-372; leading to translocation in the nucleus together with RELA and NFKB1 and expression of NF-kappa-B-dependent genes.

Its subcellular location is the cytoplasm. The protein resides in the nucleus. The protein localises to the mitochondrion. Adapter protein that plays a role in different signaling pathways including TLRs and IL-1 pathways or innate antiviral induction signaling. Plays a role in the activation of NF-kappa-B by forming a signal complex with TRAF6 and TAK1/MAP3K7 to activate TAK1/MAP3K7 leading to activation of IKKs. Once ubiquitinated, interacts with the dissociated RELA and NFKB1 proteins and translocates to the nucleus where it induces NF-kappa-B-dependent gene expression. Plays a role in innate antiviral immune response by bridging the pattern recognition receptors RIGI and MDA5/IFIT1 to the MAVS complex at the mitochondrion. Promotes proteolytic activation of MAP3K1. Involved in the BMP signaling pathway. Required for normal embryonic development. Its function is as follows. As part of the MCIA complex, involved in the assembly of the mitochondrial complex I. In Homo sapiens (Human), this protein is Evolutionarily conserved signaling intermediate in Toll pathway, mitochondrial.